The following is a 1167-amino-acid chain: Chromosome partition protein Smc (1167 aa).

Position 32–39 (32–39 (PNGCGKSN)) interacts with ATP. Coiled coils occupy residues 170–274 (ISKY…RIET), 310–390 (QREL…HNRD), 468–500 (GLQEQQRASQGELAEVRKQAQAARGRLSSLETL), 653–870 (ALLR…ERAL), and 982–1011 (EYLDAQNLDLNTALETLEEAIRKIDRETRG).

The protein belongs to the SMC family. In terms of assembly, homodimer.

It is found in the cytoplasm. In terms of biological role, required for chromosome condensation and partitioning. This is Chromosome partition protein Smc from Xanthomonas oryzae pv. oryzae (strain KACC10331 / KXO85).